We begin with the raw amino-acid sequence, 220 residues long: Redox-sensing transcriptional repressor Rex (220 aa).

The segment at residues Trp25–Val64 is a DNA-binding region (H-T-H motif). Residue Gly99–Gly104 participates in NAD(+) binding.

The protein belongs to the transcriptional regulatory Rex family. Homodimer.

It is found in the cytoplasm. Its function is as follows. Modulates transcription in response to changes in cellular NADH/NAD(+) redox state. This chain is Redox-sensing transcriptional repressor Rex, found in Bacteroides thetaiotaomicron (strain ATCC 29148 / DSM 2079 / JCM 5827 / CCUG 10774 / NCTC 10582 / VPI-5482 / E50).